We begin with the raw amino-acid sequence, 843 residues long: MMPPTRLAGTLIPAMAFLSCLRPESWDPCVQVVPNTTYQCMDLNLYKIPENIPTSTKELDLSFNPLKELGSHSFSNFPELQVLDLSRCEIEMIEDDAYQGLNHLSTLILTGNPIRSLALGAFSGLSSLQTLVAVETKLSSLEKFPIGHLKTLKELNVAHNLIHSFKLPEYFSKMPNLEHLDLSNNKIQNISHEDLRVLHQMPLLNLSLDLSLNPLEFIQPDAFKEIKLHKLTLRSNFDSIDVMKSCIQGLAGLKVNRLVLGEFKNERKLERFDTSALRGLHNLTIEEFRLAYIDNYSSKDSIDLLNCLADISKISLVSLDLGNLKDFPKGFGWQDFELVNCRIEGFPTLELTSLKRLVFTSNKDMKSFNEVKLPSLEFLDLSRNRLSFKSCCSEADLKTTRLKHLDLSFNDVISMSSNFMGLEQLEHLDFQHSTLKQASDFPVFLSLKNLRYLDISYTNTRVVFHGIFDGLVSLQVLKMAGNSFKDNFLPNIFREMTNLTTLDLSKCNLEQVSQEAFCLLPRLRVLNMSHNNLLFLDMLPYKPLHSLQILDCSFNRIVAFKWQELQHFPSSLASLNLTQNDFACVCEYQSFLQWVKDQRQLLVEVEHLVCAIPLQMRGMPVLGFNNATCQISKTIVGGSVFSILMVSVIAVLVYKFYFHLMLLAGCKKYGRGESIYDAFVIYSSQDEDWVRNELVKNLEEGVPPFQLCLHYRDFIPGVAIAANIIQEGFHKSRKVIVVVSQHFIQSRWCIFEYEIAQTWQFLSSRAGIIFIVLHKLEKSLLRQQVELYRLLNRNTYLEWEDSVLGRHIFWRRLRKALLDGKPWSPAGTADAAESRQHDAETST.

A signal peptide spans 1–23 (MMPPTRLAGTLIPAMAFLSCLRP). Residues 24 to 54 (ESWDPCVQVVPNTTYQCMDLNLYKIPENIPT) form the LRRNT domain. At 24–633 (ESWDPCVQVV…FNNATCQISK (610 aa)) the chain is on the extracellular side. A disulfide bond links Cys29 and Cys40. Asn35 is a glycosylation site (N-linked (GlcNAc...) asparagine). 8 LRR repeats span residues 55-76 (STKELDLSFNPLKELGSHSFSN), 79-100 (ELQVLDLSRCEIEMIEDDAYQG), 103-124 (HLSTLILTGNPIRSLALGAFSG), 127-148 (SLQTLVAVETKLSSLEKFPIGH), 151-172 (TLKELNVAHNLIHSFKLPEYFS), 176-197 (NLEHLDLSNNKIQNISHEDLRV), 205-225 (NLSLDLSLNPLEFIQPDAFKE), and 227-247 (KLHKLTLRSNFDSIDVMKSCI). N-linked (GlcNAc...) asparagine glycosylation is found at Asn189 and Asn205. Residues Asn282 and Asn295 are each glycosylated (N-linked (GlcNAc...) asparagine). LRR repeat units follow at residues 353 to 374 (SLKRLVFTSNKDMKSFNEVKLP), 375 to 398 (SLEFLDLSRNRLSFKSCCSEADLK), 401 to 423 (RLKHLDLSFNDVISMSSNFMGLE), 424 to 445 (QLEHLDFQHSTLKQASDFPVFL), 449 to 459 (NLRYLDISYTN), 473 to 496 (SLQVLKMAGNSFKDNFLPNIFREM), 498 to 519 (NLTTLDLSKCNLEQVSQEAFCL), 522 to 543 (RLRVLNMSHNNLLFLDMLPYKP), and 546 to 569 (SLQILDCSFNRIVAFKWQELQHFP). The cysteines at positions 391 and 392 are disulfide-linked. 2 N-linked (GlcNAc...) asparagine glycosylation sites follow: Asn498 and Asn527. Asn576 is a glycosylation site (N-linked (GlcNAc...) asparagine). The 52-residue stretch at 580 to 631 (NDFACVCEYQSFLQWVKDQRQLLVEVEHLVCAIPLQMRGMPVLGFNNATCQI) folds into the LRRCT domain. 2 disulfide bridges follow: Cys584–Cys610 and Cys586–Cys629. Asn626 is a glycosylation site (N-linked (GlcNAc...) asparagine). The chain crosses the membrane as a helical span at residues 634 to 654 (TIVGGSVFSILMVSVIAVLVY). The Cytoplasmic segment spans residues 655-843 (KFYFHLMLLA…SRQHDAETST (189 aa)). The TIR domain maps to 674 to 817 (SIYDAFVIYS…IFWRRLRKAL (144 aa)). Residues 824–843 (SPAGTADAAESRQHDAETST) are disordered. Basic and acidic residues predominate over residues 832-843 (AESRQHDAETST).

This sequence belongs to the Toll-like receptor family. In terms of assembly, belongs to the lipopolysaccharide (LPS) receptor, a multi-protein complex containing at least CD14, LY96 and TLR4. Binding to bacterial LPS leads to homodimerization. Interacts with LY96 via the extracellular domain. Interacts with MYD88 and TIRAP via their respective TIR domains. Interacts with NOX4. Interacts with CNPY3 and HSP90B1; this interaction is required for proper folding in the endoplasmic reticulum. Interacts with MAP3K21; this interaction leads to negative regulation of TLR4 signaling. Interacts with CD36, following CD36 stimulation by oxLDL or amyloid-beta 42, and forms a heterodimer with TLR6. The trimeric complex is internalized and triggers inflammatory response. LYN kinase activity facilitates TLR4-TLR6 heterodimerization and signal initiation. Interacts with TICAM1 in response to LPS in a WDFY1-dependent manner. Interacts with WDFY1 in response to LPS. Interacts with SMPDL3B. Interacts with CEACAM1; upon lipopolysaccharide stimulation, forms a complex including TLR4 and the phosphorylated form of SYK and CEACAM1, which in turn, recruits PTPN6 that dephosphorylates SYK, reducing the production of reactive oxygen species (ROS) and lysosome disruption, which in turn, reduces the activity of the inflammasome. Interacts with RFTN1; the interaction occurs in response to lipopolysaccharide stimulation. Interacts with SCIMP; the interaction occurs in response to lipopolysaccharide stimulation and is enhanced by phosphorylation of SCIMP by LYN. This interaction facilitates the phosphorylation of TLR4 by LYN which elicits a selective cytokine response in macrophages. Interacts with TRAF3IP3. Interacts with TREM1; this interaction enhances TLR4-mediated inflammatory response. Interacts with ZG16B/PAUF. Interacts with CD82; this interaction inhibits TLR4-mediated signaling pathway. Post-translationally, phosphorylated on tyrosine residues by LYN after binding lipopolysaccharide. In terms of processing, ubiquitinated by RNF128 via 'Lys-28'-linked polyubiquitin chains, leading to proteasomal degradation.

The protein resides in the cell membrane. It localises to the early endosome. The protein localises to the cell projection. It is found in the ruffle. Functionally, transmembrane receptor that functions as a pattern recognition receptor recognizing pathogen- and damage-associated molecular patterns (PAMPs and DAMPs) to induce innate immune responses via downstream signaling pathways. At the plasma membrane, cooperates with LY96 to mediate the innate immune response to bacterial lipopolysaccharide (LPS). Also involved in LPS-independent inflammatory responses triggered by free fatty acids, such as palmitate, and Ni(2+). Mechanistically, acts via MYD88, TIRAP and TRAF6, leading to NF-kappa-B activation, cytokine secretion and the inflammatory response. Alternatively, CD14-mediated TLR4 internalization via endocytosis is associated with the initiation of a MYD88-independent signaling via the TICAM1-TBK1-IRF3 axis leading to type I interferon production. In addition to the secretion of proinflammatory cytokines, initiates the activation of NLRP3 inflammasome and formation of a positive feedback loop between autophagy and NF-kappa-B signaling cascade. In complex with TLR6, promotes inflammation in monocytes/macrophages by associating with TLR6 and the receptor CD86. Upon ligand binding, such as oxLDL or amyloid-beta 42, the TLR4:TLR6 complex is internalized and triggers inflammatory response, leading to NF-kappa-B-dependent production of CXCL1, CXCL2 and CCL9 cytokines, via MYD88 signaling pathway, and CCL5 cytokine, via TICAM1 signaling pathway. In myeloid dendritic cells, vesicular stomatitis virus glycoprotein G but not LPS promotes the activation of IRF7, leading to type I IFN production in a CD14-dependent manner. This chain is Toll-like receptor 4 (TLR4), found in Equus caballus (Horse).